A 379-amino-acid chain; its full sequence is Probable tRNA sulfurtransferase (379 aa).

In terms of domain architecture, THUMP spans 52–157 (DEFLDKLKFI…RHHAFVFCKI (106 aa)). ATP is bound by residues 175–176 (LL), Arg257, Gly279, and Gln288.

Belongs to the ThiI family.

Its subcellular location is the cytoplasm. The enzyme catalyses [ThiI sulfur-carrier protein]-S-sulfanyl-L-cysteine + a uridine in tRNA + 2 reduced [2Fe-2S]-[ferredoxin] + ATP + H(+) = [ThiI sulfur-carrier protein]-L-cysteine + a 4-thiouridine in tRNA + 2 oxidized [2Fe-2S]-[ferredoxin] + AMP + diphosphate. It catalyses the reaction [ThiS sulfur-carrier protein]-C-terminal Gly-Gly-AMP + S-sulfanyl-L-cysteinyl-[cysteine desulfurase] + AH2 = [ThiS sulfur-carrier protein]-C-terminal-Gly-aminoethanethioate + L-cysteinyl-[cysteine desulfurase] + A + AMP + 2 H(+). It participates in cofactor biosynthesis; thiamine diphosphate biosynthesis. Its function is as follows. Catalyzes the ATP-dependent transfer of a sulfur to tRNA to produce 4-thiouridine in position 8 of tRNAs, which functions as a near-UV photosensor. Also catalyzes the transfer of sulfur to the sulfur carrier protein ThiS, forming ThiS-thiocarboxylate. This is a step in the synthesis of thiazole, in the thiamine biosynthesis pathway. The sulfur is donated as persulfide by IscS. The protein is Probable tRNA sulfurtransferase of Mycoplasmopsis pulmonis (strain UAB CTIP) (Mycoplasma pulmonis).